Here is a 181-residue protein sequence, read N- to C-terminus: Putative D-tyrosyl-tRNA(Tyr) deacylase 2 (181 aa).

It belongs to the DTD family. Highly divergent. As to quaternary structure, homodimer.

It localises to the cytoplasm. Its function is as follows. May hydrolyze D-tyrosyl-tRNA(Tyr) into D-tyrosine and free tRNA(Tyr). Could be a defense mechanism against a harmful effect of D-tyrosine. The protein is Putative D-tyrosyl-tRNA(Tyr) deacylase 2 of Leishmania major.